We begin with the raw amino-acid sequence, 94 residues long: Evasin P1104 (94 aa).

A signal peptide spans 1 to 28 (MASNLFTIFQLAGFVAIVFIVNLHSVSA). Intrachain disulfides connect Cys48–Cys66, Cys52–Cys68, and Cys62–Cys79. A glycan (N-linked (GlcNAc...) asparagine) is linked at Asn51.

It localises to the secreted. Functionally, salivary chemokine-binding protein which binds to host chemokines CXCL1, CXCL2, CXCL3, CXCL5, CXCL6, CXCL12 and CXCL13. This is Evasin P1104 from Ixodes ricinus (Common tick).